Here is a 364-residue protein sequence, read N- to C-terminus: uncharacterized protein (364 aa).

Residues 1–17 (MEPGELMEVDTSQELDE) are compositionally biased toward acidic residues. The interval 1-61 (MEPGELMEVD…EEDQSSTETM (61 aa)) is disordered. The span at 19 to 31 (TSAKETDQPKDAQ) shows a compositional bias: basic and acidic residues.

This is an uncharacterized protein from Caenorhabditis elegans.